The following is a 492-amino-acid chain: Aspartyl/glutamyl-tRNA(Asn/Gln) amidotransferase subunit B (492 aa).

Belongs to the GatB/GatE family. GatB subfamily. In terms of assembly, heterotrimer of A, B and C subunits.

The enzyme catalyses L-glutamyl-tRNA(Gln) + L-glutamine + ATP + H2O = L-glutaminyl-tRNA(Gln) + L-glutamate + ADP + phosphate + H(+). The catalysed reaction is L-aspartyl-tRNA(Asn) + L-glutamine + ATP + H2O = L-asparaginyl-tRNA(Asn) + L-glutamate + ADP + phosphate + 2 H(+). Allows the formation of correctly charged Asn-tRNA(Asn) or Gln-tRNA(Gln) through the transamidation of misacylated Asp-tRNA(Asn) or Glu-tRNA(Gln) in organisms which lack either or both of asparaginyl-tRNA or glutaminyl-tRNA synthetases. The reaction takes place in the presence of glutamine and ATP through an activated phospho-Asp-tRNA(Asn) or phospho-Glu-tRNA(Gln). The protein is Aspartyl/glutamyl-tRNA(Asn/Gln) amidotransferase subunit B of Pelagibacter ubique (strain HTCC1062).